A 433-amino-acid chain; its full sequence is Lipase 2 (433 aa).

The short motif at H165–G167 is the Involved in the stabilization of the negatively charged intermediate by the formation of the oxyanion hole element. S239 acts as the Charge relay system in catalysis. Catalysis depends on residues D361 and H391.

The protein belongs to the 'GDXG' lipolytic enzyme family.

The catalysed reaction is a triacylglycerol + H2O = a diacylglycerol + a fatty acid + H(+). In Moraxella sp. (strain TA144), this protein is Lipase 2 (lip2).